We begin with the raw amino-acid sequence, 255 residues long: Probable septum site-determining protein MinC (255 aa).

The span at 103-115 shows a compositional bias: basic and acidic residues; sequence SHGRRPRGERSEE. The segment at 103-136 is disordered; it reads SHGRRPRGERSEEAAEAVPAAAEPVPAPAASPAP. The span at 127–136 shows a compositional bias: pro residues; the sequence is VPAPAASPAP.

The protein belongs to the MinC family. In terms of assembly, interacts with MinD and FtsZ.

Its function is as follows. Cell division inhibitor that blocks the formation of polar Z ring septums. Rapidly oscillates between the poles of the cell to destabilize FtsZ filaments that have formed before they mature into polar Z rings. Prevents FtsZ polymerization. The chain is Probable septum site-determining protein MinC from Ralstonia nicotianae (strain ATCC BAA-1114 / GMI1000) (Ralstonia solanacearum).